The following is a 264-amino-acid chain: Vacuolar protein sorting-associated protein 75 (264 aa).

Position 3 is a phosphoserine (S3). The interval L223–V264 is disordered.

This sequence belongs to the nucleosome assembly protein (NAP) family. Homodimer. Homotetramer. Forms a complex with RTT109; consisting of a VPS75 dimer contacted by two RTT109 subunits. Interacts with RTT109; the interaction is direct. Interacts with ASF1. Interacts with histone H3/H4 heterodimers and heterotetramers via histone H3.

Its subcellular location is the nucleus. Functionally, histone chaperone which acts as a cofactor stimulating histone H3 acetylation by RTT109. Preferentially stimulates histone H3 'Lys-9' acetylation by RTT109. May also stimulate histone H3 'Lys-56' acetylation by RTT109. Assembles nucleosomes (in vitro). This chain is Vacuolar protein sorting-associated protein 75 (VPS75), found in Saccharomyces cerevisiae (strain ATCC 204508 / S288c) (Baker's yeast).